A 540-amino-acid chain; its full sequence is Phosphoenolpyruvate carboxykinase (ATP) (540 aa).

Arg-65 contributes to the substrate binding site. Lys-87 bears the N6-acetyllysine mark. Residues Tyr-207 and Lys-213 each contribute to the substrate site. ATP-binding positions include Lys-213, His-232, and 248-256 (GLSGTGKTT). Lys-213 and His-232 together coordinate Mn(2+). Residue Asp-269 coordinates Mn(2+). ATP contacts are provided by residues Glu-297, Arg-333, 449–450 (RI), and Thr-455. Position 333 (Arg-333) interacts with substrate. Lys-523 carries the N6-acetyllysine modification.

This sequence belongs to the phosphoenolpyruvate carboxykinase (ATP) family. Monomer. Mn(2+) is required as a cofactor.

Its subcellular location is the cytoplasm. The enzyme catalyses oxaloacetate + ATP = phosphoenolpyruvate + ADP + CO2. Its pathway is carbohydrate biosynthesis; gluconeogenesis. In terms of biological role, involved in the gluconeogenesis. Catalyzes the conversion of oxaloacetate (OAA) to phosphoenolpyruvate (PEP) through direct phosphoryl transfer between the nucleoside triphosphate and OAA. This chain is Phosphoenolpyruvate carboxykinase (ATP), found in Escherichia coli O7:K1 (strain IAI39 / ExPEC).